The sequence spans 261 residues: Protein LIKE COV 2 (261 aa).

The segment at 1-38 is disordered; the sequence is MAEGKEATTSSLSQGLTPHQDPDDAPKSPPNSPNSSTR. At 1–56 the chain is on the cytoplasmic side; that stretch reads MAEGKEATTSSLSQGLTPHQDPDDAPKSPPNSPNSSTRKACYGVLQSWVSKKFMTG. Residues 7–17 are compositionally biased toward polar residues; that stretch reads ATTSSLSQGLT. Residues 57-77 traverse the membrane as a helical segment; the sequence is FVVLFPVAVTFLITWWFIQFV. The Extracellular portion of the chain corresponds to 78 to 91; it reads DGFFSPIYENLGVD. Residues 92-112 form a helical membrane-spanning segment; the sequence is IFGLGFITSVLFTFFVGIFAS. At 113 to 261 the chain is on the cytoplasmic side; that stretch reads SWLGSTVFWL…HSLRVPLNRL (149 aa).

The protein belongs to the plant COV1 protein family.

The protein resides in the membrane. In Arabidopsis thaliana (Mouse-ear cress), this protein is Protein LIKE COV 2.